The sequence spans 786 residues: Sucrose synthase (786 aa).

A GT-B glycosyltransferase region spans residues 259–736 (MIFSLVVLSP…ALKRVEERYN (478 aa)).

This sequence belongs to the glycosyltransferase 1 family. Homotetramer.

It catalyses the reaction an NDP-alpha-D-glucose + D-fructose = a ribonucleoside 5'-diphosphate + sucrose + H(+). Its function is as follows. Catalyzes the reversible conversion of sucrose and a nucleotide disphosphate (NDP) into fructose and NDP-glucose; although the reaction is freely reversible in vitro, the physiological reaction seems to be sucrose cleavage. Unlike characterized plant enzymes prefers ADP as a cosubstrate, whereas plants prefer UDP. Its preference for ADP over UDP suggests it may directly link sucrose and glycogen metabolism. This Denitrovibrio acetiphilus (strain DSM 12809 / NBRC 114555 / N2460) protein is Sucrose synthase.